A 319-amino-acid polypeptide reads, in one-letter code: ATP-dependent 6-phosphofructokinase (319 aa).

Glycine 11 contributes to the ATP binding site. 21 to 25 (RAVVR) is an ADP binding site. ATP is bound by residues 72 to 73 (RC) and 102 to 105 (GDGS). Aspartate 103 contributes to the Mg(2+) binding site. 125–127 (TID) contacts substrate. Aspartate 127 serves as the catalytic Proton acceptor. Arginine 154 lines the ADP pocket. Substrate-binding positions include arginine 162 and 169–171 (MGR). ADP-binding positions include 185–187 (GAE), arginine 211, and 213–215 (KKH). Residues glutamate 222, arginine 243, and 249–252 (HIQR) each bind substrate.

It belongs to the phosphofructokinase type A (PFKA) family. ATP-dependent PFK group I subfamily. Prokaryotic clade 'B1' sub-subfamily. As to quaternary structure, homotetramer. Component of a possible RNA degradosome complex composed of rny, rnjA, rnjB, pnp, pfkA and eno (although rnjA and rnjB's presence is unclear). Specifically interacts with RNase Y (rny, PubMed:21803996) and enolase (eno, PubMed:22198292). Interacts with BrxC. Requires Mg(2+) as cofactor.

The protein localises to the cytoplasm. The enzyme catalyses beta-D-fructose 6-phosphate + ATP = beta-D-fructose 1,6-bisphosphate + ADP + H(+). It participates in carbohydrate degradation; glycolysis; D-glyceraldehyde 3-phosphate and glycerone phosphate from D-glucose: step 3/4. With respect to regulation, allosterically activated by ADP and other diphosphonucleosides, and allosterically inhibited by phosphoenolpyruvate. Its function is as follows. Catalyzes the phosphorylation of D-fructose 6-phosphate to fructose 1,6-bisphosphate by ATP, the first committing step of glycolysis. The sequence is that of ATP-dependent 6-phosphofructokinase from Bacillus subtilis (strain 168).